Consider the following 442-residue polypeptide: Trigger factor (442 aa).

Positions 163–248 (NDLVTINYCI…ILNVEEKQEN (86 aa)) constitute a PPIase FKBP-type domain.

Belongs to the FKBP-type PPIase family. Tig subfamily.

It is found in the cytoplasm. It catalyses the reaction [protein]-peptidylproline (omega=180) = [protein]-peptidylproline (omega=0). Involved in protein export. Acts as a chaperone by maintaining the newly synthesized protein in an open conformation. Functions as a peptidyl-prolyl cis-trans isomerase. The polypeptide is Trigger factor (Buchnera aphidicola subsp. Schizaphis graminum (strain Sg)).